The following is a 529-amino-acid chain: MTLSPYLQEVAKRRTFAIISHPDAGKTTITEKVLLFGQAIQTAGTVKGRGSSQHAKSDWMEMEKQRGISITTSVMQFPYHDCLVNLLDTPGHEDFSEDTYRTLTAVDCCLMVIDAAKGVEDRTRKLMEVTRLRDTPILTFMNKLDRDIRDPMELLDEVENELKIGCAPITWPIGCGKLFKGVYHLYKDETYLYQTGKGHTIQEVRIVKGLNNPDLDAAVGEDLAQQLRDELELVQGASNEFDKDLFLAGEITPVFFGTALGNFGVDHMLDGLVEWAPAPMPRNTDTREVTATEEKFTGFVFKIQANMDPKHRDRVAFMRVVSGKYEKGMKLRQVRIGKDVVISDALTFMAGDRSHVEEAYPGDIIGLHNHGTIQIGDTFTQGEMMKFTGIPNFAPELFRRIRLKDPLKQKQLLKGLVQLSEEGAVQVFRPIANNDLIVGAVGVLQFDVVVARLKSEYNVEAIYESVNVATARWVESTDVKKFEEFKRKNEVQLALDGGDNLTYIAPTMVNLNLTQERYPDVVFRKTREH.

The 270-residue stretch at 11–280 (AKRRTFAIIS…GLVEWAPAPM (270 aa)) folds into the tr-type G domain. Residues 20-27 (SHPDAGKT), 88-92 (DTPGH), and 142-145 (NKLD) contribute to the GTP site.

This sequence belongs to the TRAFAC class translation factor GTPase superfamily. Classic translation factor GTPase family. PrfC subfamily.

Its subcellular location is the cytoplasm. In terms of biological role, increases the formation of ribosomal termination complexes and stimulates activities of RF-1 and RF-2. It binds guanine nucleotides and has strong preference for UGA stop codons. It may interact directly with the ribosome. The stimulation of RF-1 and RF-2 is significantly reduced by GTP and GDP, but not by GMP. The chain is Peptide chain release factor 3 from Klebsiella pneumoniae subsp. pneumoniae (strain ATCC 700721 / MGH 78578).